The primary structure comprises 637 residues: DNA mismatch repair protein MutL (637 aa).

Belongs to the DNA mismatch repair MutL/HexB family.

Its function is as follows. This protein is involved in the repair of mismatches in DNA. It is required for dam-dependent methyl-directed DNA mismatch repair. May act as a 'molecular matchmaker', a protein that promotes the formation of a stable complex between two or more DNA-binding proteins in an ATP-dependent manner without itself being part of a final effector complex. The chain is DNA mismatch repair protein MutL from Actinobacillus succinogenes (strain ATCC 55618 / DSM 22257 / CCUG 43843 / 130Z).